Here is a 75-residue protein sequence, read N- to C-terminus: UPF0352 protein CKO_00587 (75 aa).

Belongs to the UPF0352 family.

This is UPF0352 protein CKO_00587 from Citrobacter koseri (strain ATCC BAA-895 / CDC 4225-83 / SGSC4696).